The chain runs to 429 residues: Glutamate-1-semialdehyde 2,1-aminomutase 2 (429 aa).

Lys268 bears the N6-(pyridoxal phosphate)lysine mark.

Belongs to the class-III pyridoxal-phosphate-dependent aminotransferase family. HemL subfamily. In terms of assembly, homodimer. The cofactor is pyridoxal 5'-phosphate.

The protein resides in the cytoplasm. The enzyme catalyses (S)-4-amino-5-oxopentanoate = 5-aminolevulinate. Its pathway is porphyrin-containing compound metabolism; protoporphyrin-IX biosynthesis; 5-aminolevulinate from L-glutamyl-tRNA(Glu): step 2/2. The sequence is that of Glutamate-1-semialdehyde 2,1-aminomutase 2 from Halalkalibacterium halodurans (strain ATCC BAA-125 / DSM 18197 / FERM 7344 / JCM 9153 / C-125) (Bacillus halodurans).